The sequence spans 275 residues: MDLFMRIFTIGTVTLKQGEIKDATPSDFVRATATIPIQASLPFGWLIVGVALLAVFQSASKIITLKKRWQLALSKGVHFVCNLLLLFVTVYSHLLLVAAGLEAPFLYLYALVYFLQSINFVRIIMRLWLCWKCRSKNPLLYDANYFLCWHTNCYDYCIPYNSVTSSIVITSGDGTTSPISEHDYQIGGYTEKWESGVKDCVVLHSYFTSDYYQLYSTQLSTDTGVEHVTFFIYNKIVDEPEEHVQIHTIDGSSGVVNPVMEPIYDEPTTTTSVPL.

The interval 1-39 (MDLFMRIFTIGTVTLKQGEIKDATPSDFVRATATIPIQA) is disordered. The Extracellular segment spans residues 1 to 42 (MDLFMRIFTIGTVTLKQGEIKDATPSDFVRATATIPIQASLP). 2 O-linked (GalNAc...) threonine; by host glycosylation sites follow: threonine 32 and threonine 34. In terms of domain architecture, CoV 3a-like viroporin TM spans 33–141 (ATIPIQASLP…KCRSKNPLLY (109 aa)). Residues 43–61 (FGWLIVGVALLAVFQSASK) form a helical membrane-spanning segment. Residues 62 to 67 (IITLKK) are Cytoplasmic-facing. The chain crosses the membrane as a helical span at residues 68 to 93 (RWQLALSKGVHFVCNLLLLFVTVYSH). The Extracellular portion of the chain corresponds to 94–101 (LLLVAAGL). Residues 102–126 (EAPFLYLYALVYFLQSINFVRIIMR) traverse the membrane as a helical segment. The Cytoplasmic segment spans residues 127–275 (LWLCWKCRSK…EPTTTTSVPL (149 aa)). In terms of domain architecture, CoV 3a-like viroporin CD spans 145-237 (YFLCWHTNCY…VTFFIYNKIV (93 aa)). The tract at residues 239 to 275 (EPEEHVQIHTIDGSSGVVNPVMEPIYDEPTTTTSVPL) is disordered.

Homodimer, a subset forms homotetramer of two homodimers linked non covalently. Interacts with M, S and E proteins. Also interacts with the accessory protein 7a. Interacts with host VPS39, sequestering it on late endosomes. Interacts with host HMGB1; the interaction enhances the association between HMGB1 and host BECN1, promoting reticulophagy. Interacts with HMOX1; the interaction promotes ORF3A-induced autophagy but is unlikely to be involved in ORF3A-mediated induction of reticulophagy. Post-translationally, exists in both O-glycosylated and non-glycosylated forms. The glycosylated form is associated with the virion.

It is found in the virion. The protein localises to the host cell membrane. Its subcellular location is the host endoplasmic reticulum membrane. The protein resides in the secreted. It localises to the host cytoplasm. It is found in the host endosome. The protein localises to the host lysosome. In terms of biological role, plays a role in viral egress via lysosomal trafficking. Forms homotetrameric ion channels (viroporins) localized at endosomes and lysosomes, that may induce deacidification of lysosomes, allowing safe egress of virions via lysosomal trafficking. Also blocks autolysosome formation by binding and sequestering the host component VPS39 for homotypic fusion and protein sorting (HOPS) on late endosomes. This prevents fusion of autophagosomes with lysosomes, disrupting autophagy and facilitating virus egress. Induces host RETREG1/FAM134B-dependent reticulophagy by interacting with host HMGB1 and enhancing the association between HMGB1 and host BECN1. This induces endoplasmic reticulum stress and inflammatory responses and facilitates viral infection. The chain is ORF3a protein from Severe acute respiratory syndrome coronavirus 2 (2019-nCoV).